The primary structure comprises 1203 residues: DNA-directed RNA polymerase subunit beta' (1203 aa).

4 residues coordinate Zn(2+): Cys60, Cys62, Cys75, and Cys78. 3 residues coordinate Mg(2+): Asp449, Asp451, and Asp453. Positions 818, 892, 899, and 902 each coordinate Zn(2+).

It belongs to the RNA polymerase beta' chain family. As to quaternary structure, the RNAP catalytic core consists of 2 alpha, 1 beta, 1 beta' and 1 omega subunit. When a sigma factor is associated with the core the holoenzyme is formed, which can initiate transcription. It depends on Mg(2+) as a cofactor. Requires Zn(2+) as cofactor.

It carries out the reaction RNA(n) + a ribonucleoside 5'-triphosphate = RNA(n+1) + diphosphate. In terms of biological role, DNA-dependent RNA polymerase catalyzes the transcription of DNA into RNA using the four ribonucleoside triphosphates as substrates. This Bacillus anthracis protein is DNA-directed RNA polymerase subunit beta'.